The chain runs to 284 residues: 2-dehydro-3-deoxyphosphooctonate aldolase (284 aa).

The protein belongs to the KdsA family.

It is found in the cytoplasm. It catalyses the reaction D-arabinose 5-phosphate + phosphoenolpyruvate + H2O = 3-deoxy-alpha-D-manno-2-octulosonate-8-phosphate + phosphate. It functions in the pathway carbohydrate biosynthesis; 3-deoxy-D-manno-octulosonate biosynthesis; 3-deoxy-D-manno-octulosonate from D-ribulose 5-phosphate: step 2/3. It participates in bacterial outer membrane biogenesis; lipopolysaccharide biosynthesis. This Vibrio atlanticus (strain LGP32) (Vibrio splendidus (strain Mel32)) protein is 2-dehydro-3-deoxyphosphooctonate aldolase.